A 224-amino-acid polypeptide reads, in one-letter code: GTP-binding protein RHO3 (224 aa).

22–29 (GDGACGKT) contributes to the GTP binding site. The Effector region motif lies at 44–52 (YEPTVFENY). Residues 69–73 (DTAGQ) and 127–130 (LKCD) contribute to the GTP site. Positions 205–224 (TPKGARDSAPEAESSSCTIM) are disordered. Cys-221 carries the post-translational modification Cysteine methyl ester. Residue Cys-221 is the site of S-geranylgeranyl cysteine attachment. Positions 222–224 (TIM) are cleaved as a propeptide — removed in mature form.

The protein belongs to the small GTPase superfamily. Rho family.

Its subcellular location is the cell membrane. Functionally, involved in the regulation of actin polarization. Rho proteins are required for distinct steps during polarized hyphal growth of A.gossypii. In Eremothecium gossypii (strain ATCC 10895 / CBS 109.51 / FGSC 9923 / NRRL Y-1056) (Yeast), this protein is GTP-binding protein RHO3 (RHO3).